Consider the following 461-residue polypeptide: Methylthioribose transporter (461 aa).

The next 12 helical transmembrane spans lie at leucine 33–alanine 53, alanine 56–phenylalanine 76, leucine 102–valine 122, methionine 152–valine 172, valine 185–valine 205, phenylalanine 213–leucine 233, valine 254–leucine 274, valine 301–leucine 321, threonine 355–alanine 375, histidine 376–leucine 396, valine 409–serine 429, and glycine 432–tyrosine 452.

Belongs to the amino acid-polyamine-organocation (APC) superfamily.

The protein localises to the cell membrane. Functionally, involved in import of methylthioribose (MTR) into the cell. The protein is Methylthioribose transporter of Bacillus subtilis (strain 168).